A 40-amino-acid polypeptide reads, in one-letter code: Photosystem II reaction center protein J (40 aa).

A helical transmembrane segment spans residues 8–28; the sequence is IPLWLIGTVAGIPVIGLVGVF.

The protein belongs to the PsbJ family. As to quaternary structure, PSII is composed of 1 copy each of membrane proteins PsbA, PsbB, PsbC, PsbD, PsbE, PsbF, PsbH, PsbI, PsbJ, PsbK, PsbL, PsbM, PsbT, PsbX, PsbY, PsbZ, Psb30/Ycf12, at least 3 peripheral proteins of the oxygen-evolving complex and a large number of cofactors. It forms dimeric complexes.

The protein localises to the plastid. It localises to the chloroplast thylakoid membrane. Functionally, one of the components of the core complex of photosystem II (PSII). PSII is a light-driven water:plastoquinone oxidoreductase that uses light energy to abstract electrons from H(2)O, generating O(2) and a proton gradient subsequently used for ATP formation. It consists of a core antenna complex that captures photons, and an electron transfer chain that converts photonic excitation into a charge separation. In Hordeum jubatum (Foxtail barley), this protein is Photosystem II reaction center protein J.